A 215-amino-acid polypeptide reads, in one-letter code: Endonuclease III (215 aa).

A HhH domain is found at 113–132; the sequence is REDLESLPGVGRKTANVILN. 4 residues coordinate [4Fe-4S] cluster: Cys-192, Cys-199, Cys-202, and Cys-208.

It belongs to the Nth/MutY family. It depends on [4Fe-4S] cluster as a cofactor.

The catalysed reaction is 2'-deoxyribonucleotide-(2'-deoxyribose 5'-phosphate)-2'-deoxyribonucleotide-DNA = a 3'-end 2'-deoxyribonucleotide-(2,3-dehydro-2,3-deoxyribose 5'-phosphate)-DNA + a 5'-end 5'-phospho-2'-deoxyribonucleoside-DNA + H(+). DNA repair enzyme that has both DNA N-glycosylase activity and AP-lyase activity. The DNA N-glycosylase activity releases various damaged pyrimidines from DNA by cleaving the N-glycosidic bond, leaving an AP (apurinic/apyrimidinic) site. The AP-lyase activity cleaves the phosphodiester bond 3' to the AP site by a beta-elimination, leaving a 3'-terminal unsaturated sugar and a product with a terminal 5'-phosphate. The sequence is that of Endonuclease III from Buchnera aphidicola subsp. Baizongia pistaciae (strain Bp).